Consider the following 102-residue polypeptide: Small ribosomal subunit protein uS10 (102 aa).

This sequence belongs to the universal ribosomal protein uS10 family. In terms of assembly, part of the 30S ribosomal subunit.

In terms of biological role, involved in the binding of tRNA to the ribosomes. The polypeptide is Small ribosomal subunit protein uS10 (Staphylococcus haemolyticus (strain JCSC1435)).